We begin with the raw amino-acid sequence, 592 residues long: NADH-quinone oxidoreductase subunit C/D (592 aa).

Residues 1 to 183 are NADH dehydrogenase I subunit C; the sequence is MSAAQSPTAQ…DPYTLTVEGQ (183 aa). Positions 207–592 are NADH dehydrogenase I subunit D; that stretch reads DYMFLNLGPN…IDFVMADVDR (386 aa).

The protein in the N-terminal section; belongs to the complex I 30 kDa subunit family. In the C-terminal section; belongs to the complex I 49 kDa subunit family. As to quaternary structure, NDH-1 is composed of 13 different subunits. Subunits NuoB, CD, E, F, and G constitute the peripheral sector of the complex.

The protein resides in the cell inner membrane. The enzyme catalyses a quinone + NADH + 5 H(+)(in) = a quinol + NAD(+) + 4 H(+)(out). Functionally, NDH-1 shuttles electrons from NADH, via FMN and iron-sulfur (Fe-S) centers, to quinones in the respiratory chain. The immediate electron acceptor for the enzyme in this species is believed to be ubiquinone. Couples the redox reaction to proton translocation (for every two electrons transferred, four hydrogen ions are translocated across the cytoplasmic membrane), and thus conserves the redox energy in a proton gradient. In Chromohalobacter salexigens (strain ATCC BAA-138 / DSM 3043 / CIP 106854 / NCIMB 13768 / 1H11), this protein is NADH-quinone oxidoreductase subunit C/D.